A 104-amino-acid chain; its full sequence is MTNRLELSGVIAKDPKRSQSPAGVPHCHFVLEHRSYQREADLPRQVYCYINVVSSGKGLQVLTQDLAVGVHTKVAGFISYQTGRNGIGKLVLHADHIEIICSGD.

The 101-residue stretch at 1–101 (MTNRLELSGV…LHADHIEIIC (101 aa)) folds into the SSB domain.

Belongs to the PriB family. In terms of assembly, homodimer. Interacts with PriA and DnaT. Component of the replication restart primosome. Primosome assembly occurs via a 'hand-off' mechanism. PriA binds to replication forks, subsequently PriB then DnaT bind; DnaT then displaces ssDNA to generate the helicase loading substrate.

Functionally, involved in the restart of stalled replication forks, which reloads the replicative helicase on sites other than the origin of replication; the PriA-PriB pathway is the major replication restart pathway. During primosome assembly it facilitates complex formation between PriA and DnaT on DNA; stabilizes PriA on DNA. Stimulates the DNA unwinding activity of PriA helicase. In Photobacterium profundum (strain SS9), this protein is Replication restart protein PriB.